The following is a 431-amino-acid chain: Tol-Pal system protein TolB (431 aa).

An N-terminal signal peptide occupies residues 1 to 26; it reads MRLMTKLGFRALVASCLIAAGAAANA. Residues 411–431 form a disordered region; it reads PQILSVQGGSVREPSWGPFMQ.

The protein belongs to the TolB family. The Tol-Pal system is composed of five core proteins: the inner membrane proteins TolA, TolQ and TolR, the periplasmic protein TolB and the outer membrane protein Pal. They form a network linking the inner and outer membranes and the peptidoglycan layer.

It localises to the periplasm. Functionally, part of the Tol-Pal system, which plays a role in outer membrane invagination during cell division and is important for maintaining outer membrane integrity. The protein is Tol-Pal system protein TolB of Burkholderia ambifaria (strain ATCC BAA-244 / DSM 16087 / CCUG 44356 / LMG 19182 / AMMD) (Burkholderia cepacia (strain AMMD)).